A 134-amino-acid chain; its full sequence is UPF0299 membrane protein KPK_1586 (134 aa).

Transmembrane regions (helical) follow at residues 5–25 (LTIIWQYLRAFVLIYACLYAG), 26–46 (IFIAGLLPITIPGSIIGMLIL), 66–86 (ILIRYMALLFVPIGVGVMQYW), and 93–113 (LGPVVISCAISTLVVFVVVSW).

This sequence belongs to the UPF0299 family.

It is found in the cell inner membrane. This chain is UPF0299 membrane protein KPK_1586, found in Klebsiella pneumoniae (strain 342).